An 830-amino-acid chain; its full sequence is Outer dense fiber protein 2 (830 aa).

Phosphoserine is present on residues Ser73 and Ser74. Thr92 bears the Phosphothreonine mark. Ser95 bears the Phosphoserine; by TSSK4 mark. Phosphoserine occurs at positions 106 and 109. Thr110 is subject to Phosphothreonine. Residues Ser115 and Ser129 each carry the phosphoserine modification. A Glycyl lysine isopeptide (Lys-Gly) (interchain with G-Cter in SUMO2) cross-link involves residue Lys138. Ser139 is modified (phosphoserine). Positions 144–217 (QKGERQMAKR…MSKLVEAEMD (74 aa)) form a coiled coil. Thr231 carries the phosphothreonine modification. 2 coiled-coil regions span residues 245-423 (DINT…AEQL) and 461-798 (EIIV…NYVQ). A phosphoserine mark is found at Ser261 and Ser632. The interval 537 to 701 (KNYEGMIDNY…EAIHQAQLRL (165 aa)) is interaction with BBOF1.

The protein belongs to the ODF2 family. As to quaternary structure, self-associates. Associates with microtubules and forms a fibrillar structure partially linked to the microtubule network. Interacts via its C-terminus with PLK1. Interacts with ODF1. Interacts with MARK4; the interaction is required for localization of ODF2 to centrioles. Interacts with TSSK4. Interacts with AKNA. Interacts with CFAP58. Interacts with BBOF1. Interacts with CCDC38. Interacts with CCDC42. Tyrosine phosphorylated. Phosphorylated on Ser-95 by TSSK4. As to expression, testis-specific (at protein level). Expressed in spermatids at tubular stage V of the spermatogenic cycle. Highly expressed in the cytoplasm of elongating spermatids (tubular stages X/XI). In step 14/15 spermatids of tubular stage III/IV low expression detected. No expression detected in other testicular cells as well as the early round of spermatids.

Its subcellular location is the cytoplasm. It is found in the cytoskeleton. It localises to the microtubule organizing center. The protein resides in the centrosome. The protein localises to the cell projection. Its subcellular location is the cilium. It is found in the centriole. It localises to the spindle pole. The protein resides in the flagellum. Its function is as follows. Seems to be a major component of sperm tail outer dense fibers (ODF). ODFs are filamentous structures located on the outside of the axoneme in the midpiece and principal piece of the mammalian sperm tail and may help to maintain the passive elastic structures and elastic recoil of the sperm tail. May have a modulating influence on sperm motility. Functions as a general scaffold protein that is specifically localized at the distal/subdistal appendages of mother centrioles. Component of the centrosome matrix required for the localization of PLK1 and NIN to the centrosomes. Required for the formation and/or maintenance of normal CETN1 assembly. The sequence is that of Outer dense fiber protein 2 (Odf2) from Mus musculus (Mouse).